Reading from the N-terminus, the 820-residue chain is DNA mismatch repair protein MutS (820 aa).

618 to 625 (GPNMAGKS) serves as a coordination point for ATP.

The protein belongs to the DNA mismatch repair MutS family.

In terms of biological role, this protein is involved in the repair of mismatches in DNA. It is possible that it carries out the mismatch recognition step. This protein has a weak ATPase activity. The chain is DNA mismatch repair protein MutS from Chlamydia trachomatis serovar L2b (strain UCH-1/proctitis).